The chain runs to 157 residues: Monooxygenase CPUR_05417 (157 aa).

The protein belongs to the avfA family.

It participates in secondary metabolite biosynthesis. Monooxygenase; part of the ergochrome gene cluster responsible for the typical purple-black color of the ergot sclerotia. The ergochrome gene cluster produces several ergot pigments including the yellow ergochrome secalonic acid and its derivatives, as well as the red anthraquinones endocrocin and clavorubin. The pathway begins with the synthesis of atrochrysone thioester by the polyketide synthase (PKS) CPUR_05437. The atrochrysone carboxyl ACP thioesterase CPUR_05436 then breaks the thioester bond and releases the atrochrysone carboxylic acid from CPUR_05437. The atrochrysone carboxylic acid is then converted to atrochrysone which is further transformed into emodin anthrone. The next step is performed by the anthrone oxygenase CPUR_05434 that catalyzes the oxidation of emodinanthrone to emodin. Emodin is further modified to yield monodictyphenone via several steps involving CPUR_05427, CPUR_05428, CPUR_05429 and CPUR_05430. The short chain dehydrogenase/reductase CPUR_05418 then catalyzes the C-5 ketoreduction to give the xanthone skeleton of the monomeric units. Ergochromes formation requires further dimerization steps of different xanthone units, probably catalyzed by the cytochrome P450 monooxygenase CPUR_05419. CPUR_05425, CPUR_05426 and CPUR_05431 are unique to Claviceps, thus it is likely that they are involved in further modification of xanthone units or in their dimerization. The yellow ergochromes and the red anthraquinone pigments endocrocin and clavorubin are products from the same PKS derived precursors and the latter are likely shunt products in the pathway of xanthone biosynthesis. It is proposed that atrochrysone carboxylic acid released from the PKS CPUR_05437 can also be converted to endocrocin anthrone which is further oxidized into endocrocin by CPUR_05435. Endocrocin could be then modified to clavorubin, possibly by CPUR_05423 and CPUR_05431. Clavorubin is the principal anthraquinone metabolite produced by the cluster with a much higher yield compared to endocrocin. This chain is Monooxygenase CPUR_05417, found in Claviceps purpurea (strain 20.1) (Ergot fungus).